Reading from the N-terminus, the 222-residue chain is Large ribosomal subunit protein uL1 (222 aa).

It belongs to the universal ribosomal protein uL1 family. As to quaternary structure, part of the 50S ribosomal subunit.

Its function is as follows. Binds directly to 23S rRNA. Probably involved in E site tRNA release. Protein L1 is also a translational repressor protein, it controls the translation of its operon by binding to its mRNA. This is Large ribosomal subunit protein uL1 from Pyrobaculum aerophilum (strain ATCC 51768 / DSM 7523 / JCM 9630 / CIP 104966 / NBRC 100827 / IM2).